We begin with the raw amino-acid sequence, 360 residues long: Threonine synthase (360 aa).

K69 carries the post-translational modification N6-(pyridoxal phosphate)lysine. Residues N95, 196-200 (GNAGN), and T326 contribute to the pyridoxal 5'-phosphate site.

This sequence belongs to the threonine synthase family. Homodimer. Pyridoxal 5'-phosphate serves as cofactor.

It carries out the reaction O-phospho-L-homoserine + H2O = L-threonine + phosphate. Its pathway is amino-acid biosynthesis; L-threonine biosynthesis; L-threonine from L-aspartate: step 5/5. Functionally, catalyzes the gamma-elimination of phosphate from L-phosphohomoserine and the beta-addition of water to produce L-threonine. This Mycobacterium leprae (strain TN) protein is Threonine synthase (thrC).